Reading from the N-terminus, the 416-residue chain is UDP-N-acetylglucosamine 1-carboxyvinyltransferase (416 aa).

Residue 22-23 (KN) participates in phosphoenolpyruvate binding. Arginine 92 contacts UDP-N-acetyl-alpha-D-glucosamine. Cysteine 116 serves as the catalytic Proton donor. Cysteine 116 carries the 2-(S-cysteinyl)pyruvic acid O-phosphothioketal modification. UDP-N-acetyl-alpha-D-glucosamine contacts are provided by residues 121-125 (RPVDQ), aspartate 304, and isoleucine 326.

The protein belongs to the EPSP synthase family. MurA subfamily.

It localises to the cytoplasm. The catalysed reaction is phosphoenolpyruvate + UDP-N-acetyl-alpha-D-glucosamine = UDP-N-acetyl-3-O-(1-carboxyvinyl)-alpha-D-glucosamine + phosphate. It participates in cell wall biogenesis; peptidoglycan biosynthesis. Its function is as follows. Cell wall formation. Adds enolpyruvyl to UDP-N-acetylglucosamine. The sequence is that of UDP-N-acetylglucosamine 1-carboxyvinyltransferase from Aromatoleum aromaticum (strain DSM 19018 / LMG 30748 / EbN1) (Azoarcus sp. (strain EbN1)).